Consider the following 152-residue polypeptide: Superoxide dismutase [Cu-Zn] (152 aa).

Residues His-45, His-47, and His-62 each coordinate Cu cation. The cysteines at positions 56 and 145 are disulfide-linked. Zn(2+) is bound by residues His-62, His-70, His-79, and Asp-82. His-119 is a Cu cation binding site.

This sequence belongs to the Cu-Zn superoxide dismutase family. In terms of assembly, homodimer. The cofactor is Cu cation. Requires Zn(2+) as cofactor.

It localises to the cytoplasm. The enzyme catalyses 2 superoxide + 2 H(+) = H2O2 + O2. Functionally, destroys radicals which are normally produced within the cells and which are toxic to biological systems. This Spinacia oleracea (Spinach) protein is Superoxide dismutase [Cu-Zn] (SODCC).